Here is a 305-residue protein sequence, read N- to C-terminus: Tyrosine recombinase XerC (305 aa).

The 92-residue stretch at 4–95 (TSIQALINKW…AVKNFYRFLE (92 aa)) folds into the Core-binding (CB) domain. The region spanning 116–298 (LLPKALSEDD…SIKHLEAVYT (183 aa)) is the Tyr recombinase domain. Residues R159, K182, H250, R253, and H276 contribute to the active site. The active-site O-(3'-phospho-DNA)-tyrosine intermediate is Y285.

The protein belongs to the 'phage' integrase family. XerC subfamily. In terms of assembly, forms a cyclic heterotetrameric complex composed of two molecules of XerC and two molecules of XerD.

The protein localises to the cytoplasm. In terms of biological role, site-specific tyrosine recombinase, which acts by catalyzing the cutting and rejoining of the recombining DNA molecules. The XerC-XerD complex is essential to convert dimers of the bacterial chromosome into monomers to permit their segregation at cell division. It also contributes to the segregational stability of plasmids. This Rickettsia peacockii (strain Rustic) protein is Tyrosine recombinase XerC.